The chain runs to 357 residues: Membrane-bound lytic murein transglycosylase C (357 aa).

A signal peptide spans 1-17 (MKLKKFLVLLLIPFLYA). A lipid anchor (N-palmitoyl cysteine) is attached at Cys18. Cys18 carries the S-diacylglycerol cysteine lipid modification.

Belongs to the transglycosylase Slt family.

It localises to the cell outer membrane. The catalysed reaction is Exolytic cleavage of the (1-&gt;4)-beta-glycosidic linkage between N-acetylmuramic acid (MurNAc) and N-acetylglucosamine (GlcNAc) residues in peptidoglycan, from either the reducing or the non-reducing ends of the peptidoglycan chains, with concomitant formation of a 1,6-anhydrobond in the MurNAc residue.. Functionally, murein-degrading enzyme. May play a role in recycling of muropeptides during cell elongation and/or cell division. This chain is Membrane-bound lytic murein transglycosylase C, found in Mannheimia succiniciproducens (strain KCTC 0769BP / MBEL55E).